We begin with the raw amino-acid sequence, 623 residues long: Protein FAM234B (623 aa).

The segment at 1–82 is disordered; it reads MATVLSRALK…TSERAPEGYP (82 aa). Residues 104–124 form a helical membrane-spanning segment; the sequence is AVFLLTVVISMILVLVCAFLI.

This sequence belongs to the FAM234 family.

It localises to the membrane. The protein localises to the golgi outpost. The protein resides in the cytoplasm. Its subcellular location is the cytoskeleton. It is found in the microtubule organizing center. This Gallus gallus (Chicken) protein is Protein FAM234B (FAM234B).